Reading from the N-terminus, the 876-residue chain is MAP7 domain-containing protein 3 (876 aa).

Position 1 is an N-acetylmethionine (Met1). A coiled-coil region spans residues Asn65–Ala144. 2 disordered regions span residues Ala72–Ala137 and Ala170–Val246. Over residues Met171–Ser183 the composition is skewed to polar residues. Ser185 is subject to Phosphoserine. Over residues Gln191–Val211 the composition is skewed to polar residues. Residues Arg214–Pro244 are compositionally biased toward basic and acidic residues. Phosphoserine is present on Ser322. The disordered stretch occupies residues Glu407–Met475. Residues Ala425–Met438 are compositionally biased toward basic and acidic residues. Residues Ser441, Ser457, and Ser461 each carry the phosphoserine modification. Residues Lys465–Met475 show a composition bias toward basic and acidic residues. Ser490 carries the post-translational modification Phosphoserine. Disordered stretches follow at residues Ser509–Ser533, Gln613–His697, and Arg723–Asp754. Polar residues predominate over residues Pro510–Cys521. A Phosphoserine modification is found at Ser524. 2 coiled-coil regions span residues Val558 to Glu640 and Glu689 to Lys724. 2 stretches are compositionally biased toward basic and acidic residues: residues Gln613 to Lys639 and Gly680 to His697. Over residues Glu742–Asp752 the composition is skewed to acidic residues. A phosphoserine mark is found at Ser770 and Ser817. Positions Pro802 to Gln876 are disordered. Positions Asp820–Pro830 are enriched in polar residues. Over residues Ser831 to Thr842 the composition is skewed to basic residues. Position 832 is a phosphoserine (Ser832). Residues Thr848–Ser860 are compositionally biased toward polar residues. Residues Glu861–Gln876 are compositionally biased toward basic and acidic residues.

This sequence belongs to the MAP7 family. As to quaternary structure, interacts (via N-terminus coiled coil domains) with tubulin and microtubules.

It localises to the cytoplasm. It is found in the cytoskeleton. The protein localises to the spindle. Promotes the assembly and stability of microtubules. The protein is MAP7 domain-containing protein 3 (MAP7D3) of Homo sapiens (Human).